A 109-amino-acid chain; its full sequence is Gliadoralin-A (109 aa).

The signal sequence occupies residues 1-16 (MLVILLMVVVLALSSA). The residue at position 17 (Gln17) is a Pyrrolidone carboxylic acid. Residues 17-109 (QDPNRDFVVS…PRYQQPRRAV (93 aa)) are disordered. Residues 35–109 (PSSQQGTVGG…PRYQQPRRAV (75 aa)) show a composition bias toward low complexity. A propeptide spanning residues 107–109 (RAV) is cleaved from the precursor.

Predominantly proteolytically processed at its C-terminus before secretion to produce the major form gliadoralin A 1-90. Further proteloytically processed after secretion to produce minor forms. Potential substrate of transglutaminase. Found in saliva (at protein level). Secreted from the submandibular gland.

It localises to the secreted. In terms of biological role, may play a role in the formation of the protective mucosal protein pellicle involved in the reinforcement and protection of oral mucosal epithelial surface. The sequence is that of Gliadoralin-A from Rattus norvegicus (Rat).